We begin with the raw amino-acid sequence, 68 residues long: Frenatin-3 (68 aa).

A signal peptide spans 1–22 (MHFLKKSIFLVLFLGLVSLSIC). The propeptide occupies 23–46 (EKEKREDQNEEEVDENEEESEEKR). Residues 26 to 47 (KREDQNEEEVDENEEESEEKRG) form a disordered region. Positions 30–42 (QNEEEVDENEEES) are enriched in acidic residues.

The protein belongs to the frog skin active peptide (FSAP) family. Frenatin subfamily. In terms of tissue distribution, expressed by the granular skin glands.

Its subcellular location is the secreted. Its function is as follows. Antimicrobial peptide with activity against both Gram-positive and Gram-negative bacteria. Antibacterial activities have been tested against Bacillus cereus (MIC=12.5 ug/ml), Escherichia coli (MIC=50 ug/ml), Leuconostoc mesenteroides (MIC=25 ug/ml), Micrococcus luteus (MIC=1.5 ug/ml), Pastewella haemolytica (MIC=0.8 ug/ml), Staphylococcus aureus (MIC&lt;l00 ug/ml), Streptococcus faecalis (MIC&lt;150 ug/ml) and Streptococcus uberis (MIC=50 ug/ml). Strongly inhibits the formation of NO by neuronal nitric oxide synthase (nNOS) at micromolar concentrations. Acts by a non-competitive mechanism, probably by binding to calcium/calmodulin and as a consequence blocking calmodulin attachment to nNOS. This Nyctimystes infrafrenatus (White-lipped tree frog) protein is Frenatin-3.